A 432-amino-acid chain; its full sequence is Adenylosuccinate synthetase (432 aa).

GTP contacts are provided by residues 12 to 18 (GDEGKGK) and 40 to 42 (GHT). Aspartate 13 (proton acceptor) is an active-site residue. 2 residues coordinate Mg(2+): aspartate 13 and glycine 40. IMP-binding positions include 13 to 16 (DEGK), 38 to 41 (NAGH), threonine 132, arginine 146, glutamine 226, threonine 241, and arginine 305. Catalysis depends on histidine 41, which acts as the Proton donor. Substrate is bound at residue 301 to 307 (VVTGRKR). Residues arginine 307, 333-335 (KLD), and 415-417 (STS) contribute to the GTP site.

The protein belongs to the adenylosuccinate synthetase family. As to quaternary structure, homodimer. The cofactor is Mg(2+).

The protein resides in the cytoplasm. The catalysed reaction is IMP + L-aspartate + GTP = N(6)-(1,2-dicarboxyethyl)-AMP + GDP + phosphate + 2 H(+). The protein operates within purine metabolism; AMP biosynthesis via de novo pathway; AMP from IMP: step 1/2. Its function is as follows. Plays an important role in the de novo pathway of purine nucleotide biosynthesis. Catalyzes the first committed step in the biosynthesis of AMP from IMP. This chain is Adenylosuccinate synthetase, found in Rhizobium johnstonii (strain DSM 114642 / LMG 32736 / 3841) (Rhizobium leguminosarum bv. viciae).